A 624-amino-acid polypeptide reads, in one-letter code: DNA (cytosine-5)-methyltransferase DRM1 (624 aa).

UBA domains lie at 57-100 (RISD…LFNY) and 108-149 (SSKS…LLTY). The segment at 160 to 189 (DMNININDDDDDNLYSLSSDDEEDELNNSS) is disordered. Over residues 166–185 (NDDDDDNLYSLSSDDEEDEL) the composition is skewed to acidic residues. A UBA 3 domain is found at 188–231 (SSNEDRILQALIKMGYLREDAAIAIERCGEDASMEEVVDFICAA). The region spanning 291–622 (MHRPVPIPDI…EAVRRKARHM (332 aa)) is the SAM-dependent MTase DRM-type domain.

The protein belongs to the class I-like SAM-binding methyltransferase superfamily. DRM-methyltransferase family.

The protein resides in the nucleus. It catalyses the reaction a 2'-deoxycytidine in DNA + S-adenosyl-L-methionine = a 5-methyl-2'-deoxycytidine in DNA + S-adenosyl-L-homocysteine + H(+). Its function is as follows. Involved in de novo DNA methylation. Controls asymmetric and CpNpG methylation. Required for FWA gene silencing but not for the maintenance of SUP gene silencing. Functionally redundant to CMT3 to maintain non-CpG methylation. Involved in RNA-directed DNA methylation. The protein is DNA (cytosine-5)-methyltransferase DRM1 (DRM1) of Arabidopsis thaliana (Mouse-ear cress).